The following is a 663-amino-acid chain: Translation factor GUF1, mitochondrial (663 aa).

The N-terminal 44 residues, 1–44 (MRGCLQSVRWLTTALRRPAPQLSCLPFQPFASTSRLFSSCASRA), are a transit peptide targeting the mitochondrion. The tr-type G domain maps to 65–245 (ERFRNFCIVA…TIVEQIPAPV (181 aa)). GTP is bound by residues 74-81 (AHVDHGKS), 138-142 (DTPGH), and 192-195 (NKVD).

The protein belongs to the TRAFAC class translation factor GTPase superfamily. Classic translation factor GTPase family. LepA subfamily.

The protein resides in the mitochondrion inner membrane. The enzyme catalyses GTP + H2O = GDP + phosphate + H(+). In terms of biological role, promotes mitochondrial protein synthesis. May act as a fidelity factor of the translation reaction, by catalyzing a one-codon backward translocation of tRNAs on improperly translocated ribosomes. Binds to mitochondrial ribosomes in a GTP-dependent manner. This chain is Translation factor GUF1, mitochondrial, found in Coccidioides posadasii (strain C735) (Valley fever fungus).